The primary structure comprises 66 residues: Large ribosomal subunit protein uL29 (66 aa).

Belongs to the universal ribosomal protein uL29 family.

The chain is Large ribosomal subunit protein uL29 from Syntrophobacter fumaroxidans (strain DSM 10017 / MPOB).